The chain runs to 343 residues: Protein pelota homolog (343 aa).

Belongs to the eukaryotic release factor 1 family. Pelota subfamily. As to quaternary structure, monomer. It depends on a divalent metal cation as a cofactor.

It is found in the cytoplasm. May function in recognizing stalled ribosomes, interact with stem-loop structures in stalled mRNA molecules, and effect endonucleolytic cleavage of the mRNA. May play a role in the release non-functional ribosomes and degradation of damaged mRNAs. Has endoribonuclease activity. The protein is Protein pelota homolog of Cenarchaeum symbiosum (strain A).